The sequence spans 184 residues: MNRPVKGVADKAEKSKVKRKTREELEREARERKRDKKHRGHSAGSRTQEKASTDQNSGQRKVADPRIGSKKPVQLGVLDSAIVKPKPKSKPSEPVEKVVAAKPTMSPEEELAMLENDTRLDALLDRLDSGETLSAKDQSWVDETLDRIDILMEELGIELGDDDEEEQQEDMLQLLKRNNPKDAL.

2 disordered regions span residues M1–S106 and L159–L184. A compositionally biased stretch (basic and acidic residues) spans V8–R32. Residues L159 to E169 show a composition bias toward acidic residues.

This sequence belongs to the YihI family. As to quaternary structure, interacts with Der.

Functionally, a GTPase-activating protein (GAP) that modifies Der/EngA GTPase function. May play a role in ribosome biogenesis. The chain is Der GTPase-activating protein YihI from Pectobacterium atrosepticum (strain SCRI 1043 / ATCC BAA-672) (Erwinia carotovora subsp. atroseptica).